The sequence spans 331 residues: Cytoskeleton protein RodZ (331 aa).

The Cytoplasmic portion of the chain corresponds to 1–111 (MNTEATQDHQ…LGKRRKKRDG (111 aa)). The region spanning 19-71 (LRHAREQLGLSQQAVAERLCLKVSTVRDIEDDKAPADLASTFLRGYIRSYARL) is the HTH cro/C1-type domain. Positions 30-49 (QQAVAERLCLKVSTVRDIED) form a DNA-binding region, H-T-H motif. A helical; Signal-anchor for type II membrane protein membrane pass occupies residues 112 to 132 (WLMSFTWLVLFVVIGLSGAWW). Residues 133–331 (WQDHKAQQEE…TLNAESSPAQ (199 aa)) lie on the Periplasmic side of the membrane. Positions 146–166 (MADQSSAELNGGDANSQNVPL) are enriched in polar residues. The disordered stretch occupies residues 146-238 (MADQSSAELN…ASPLPTDQAN (93 aa)). Low complexity-rich tracts occupy residues 167–202 (DTSA…TPAD) and 216–234 (TAGT…PLPT).

Belongs to the RodZ family.

Its subcellular location is the cell inner membrane. In terms of biological role, cytoskeletal protein that is involved in cell-shape control through regulation of the length of the long axis. The polypeptide is Cytoskeleton protein RodZ (Klebsiella pneumoniae subsp. pneumoniae (strain ATCC 700721 / MGH 78578)).